A 517-amino-acid chain; its full sequence is PSTB2-interacting protein 1 (517 aa).

As to quaternary structure, interacts with PDR17/PSTB2 and SCS2.

Its function is as follows. Phosphatidic acid-binding protein involved in interorganelle phosphatidylserine (PtdSer) transport. Linkks a PtdSer donor membrane (via binding of SCS2 and phosphatidic acid present in the donor membrane) with an acceptor membrane (via its interaction with PDR17), forming a zone of apposition that facilitates PtdSer transfer. The protein is PSTB2-interacting protein 1 of Saccharomyces cerevisiae (strain ATCC 204508 / S288c) (Baker's yeast).